A 529-amino-acid chain; its full sequence is BAR/IMD domain-containing adapter protein 2-like 2 (529 aa).

One can recognise an IMD domain in the interval 1-239 (MAPEMDQFYR…HSPGLLGPAL (239 aa)). Disordered regions lie at residues 221 to 327 (EASR…GGAR) and 403 to 510 (TSMS…TNPF). Residues Ser-231, Ser-272, and Ser-302 each carry the phosphoserine modification. Residues 299-313 (SASSLYSGSAQSSRS) show a composition bias toward low complexity. In terms of domain architecture, SH3 spans 324–387 (GGARRVRALV…PEAYVKALEE (64 aa)). Composition is skewed to low complexity over residues 403–413 (TSMSPMTPMNP) and 452–462 (RSRTPSRVPSR). Positions 463-472 (APSPAPPPLP) are enriched in pro residues. Ser-478 and Ser-481 each carry phosphoserine.

Expressed in the epithelial layer of the intestine (at protein level).

It localises to the cell membrane. Its subcellular location is the cell junction. The protein resides in the cytoplasmic vesicle membrane. Its function is as follows. Phosphoinositides-binding protein that induces the formation of planar or gently curved membrane structures. Binds to phosphoinositides, including to phosphatidylinositol 4,5-bisphosphate (PtdIns(4,5)P2) headgroups. There seems to be no clear preference for a specific phosphoinositide. This Homo sapiens (Human) protein is BAR/IMD domain-containing adapter protein 2-like 2 (BAIAP2L2).